Consider the following 664-residue polypeptide: Methionine--tRNA ligase (664 aa).

A 'HIGH' region motif is present at residues 15–25; the sequence is YYPSGKAHIGH. Positions 310 to 314 match the 'KMSKS' region motif; sequence KMSKS. Position 313 (lysine 313) interacts with ATP. Residues 563 to 664 form the tRNA-binding domain; it reads DFDKIDLRVA…SALPNGAKVK (102 aa).

Belongs to the class-I aminoacyl-tRNA synthetase family. MetG type 2B subfamily. Homodimer.

It is found in the cytoplasm. It carries out the reaction tRNA(Met) + L-methionine + ATP = L-methionyl-tRNA(Met) + AMP + diphosphate. Functionally, is required not only for elongation of protein synthesis but also for the initiation of all mRNA translation through initiator tRNA(fMet) aminoacylation. The polypeptide is Methionine--tRNA ligase (metG) (Listeria monocytogenes serovar 1/2a (strain ATCC BAA-679 / EGD-e)).